Reading from the N-terminus, the 246-residue chain is 4-hydroxy-tetrahydrodipicolinate reductase (246 aa).

9–14 (GNTGRM) is an NAD(+) binding site. Residue arginine 36 coordinates NADP(+). Residues 78-80 (GTT) and 104-107 (SPNM) each bind NAD(+). The active-site Proton donor/acceptor is the histidine 137. Histidine 138 lines the (S)-2,3,4,5-tetrahydrodipicolinate pocket. Catalysis depends on lysine 141, which acts as the Proton donor. 147 to 148 (GT) serves as a coordination point for (S)-2,3,4,5-tetrahydrodipicolinate.

It belongs to the DapB family.

Its subcellular location is the cytoplasm. The enzyme catalyses (S)-2,3,4,5-tetrahydrodipicolinate + NAD(+) + H2O = (2S,4S)-4-hydroxy-2,3,4,5-tetrahydrodipicolinate + NADH + H(+). The catalysed reaction is (S)-2,3,4,5-tetrahydrodipicolinate + NADP(+) + H2O = (2S,4S)-4-hydroxy-2,3,4,5-tetrahydrodipicolinate + NADPH + H(+). It participates in amino-acid biosynthesis; L-lysine biosynthesis via DAP pathway; (S)-tetrahydrodipicolinate from L-aspartate: step 4/4. Functionally, catalyzes the conversion of 4-hydroxy-tetrahydrodipicolinate (HTPA) to tetrahydrodipicolinate. The protein is 4-hydroxy-tetrahydrodipicolinate reductase of Chlamydia muridarum (strain MoPn / Nigg).